A 183-amino-acid chain; its full sequence is Auxin-responsive protein IAA20 (183 aa).

Disordered regions lie at residues M1 to A23 and G42 to R77. Positions L3–L7 match the EAR-like (transcriptional repression) motif. Positions G98–V183 constitute a PB1 domain.

Belongs to the Aux/IAA family. In terms of assembly, homodimers and heterodimers. Expressed at very low levels in etiolated seedlings and flowers.

The protein localises to the nucleus. Functionally, aux/IAA proteins are short-lived transcriptional factors that function as repressors of early auxin response genes at low auxin concentrations. The chain is Auxin-responsive protein IAA20 (IAA20) from Oryza sativa subsp. japonica (Rice).